Reading from the N-terminus, the 117-residue chain is CUE domain-containing protein CUE4 (117 aa).

The interval 27–74 is disordered; sequence QVPSRTVQDAKPAPSVATNDPSPEPVPSAPEERVARLNRHGSDRKRAV. Residue Lys37 forms a Glycyl lysine isopeptide (Lys-Gly) (interchain with G-Cter in ubiquitin) linkage. Ser48 carries the post-translational modification Phosphoserine. Over residues 56 to 74 the composition is skewed to basic and acidic residues; sequence PEERVARLNRHGSDRKRAV. The CUE domain occupies 74–116; the sequence is VNSDMVEIVMTMAPHVPQEKVVQDLRNTGSIEHTMENIFAGKL.

In terms of processing, ubiquitinated.

The protein localises to the cytoplasm. The protein resides in the endoplasmic reticulum. In Saccharomyces cerevisiae (strain ATCC 204508 / S288c) (Baker's yeast), this protein is CUE domain-containing protein CUE4 (CUE4).